The following is a 507-amino-acid chain: Sulfatase (507 aa).

The first 18 residues, 1–18 (MKTRYFLLLGICMLSCRT), serve as a signal peptide directing secretion. The Ca(2+) site is built by aspartate 39, aspartate 40, and cysteine 79. Cysteine 79 acts as the Nucleophile in catalysis. Cysteine 79 is subject to 3-oxoalanine (Cys). Histidine 139 is a catalytic residue. Positions 325 and 326 each coordinate Ca(2+).

The protein belongs to the sulfatase family. Requires Ca(2+) as cofactor. The conversion to 3-oxoalanine (also known as C-formylglycine, FGly), of a serine or cysteine residue in prokaryotes and of a cysteine residue in eukaryotes, is critical for catalytic activity. This post-translational modification is severely defective in multiple sulfatase deficiency (MSD).

Its subcellular location is the periplasm. Functionally, sulfatase that may be involved in ulvan degradation. Ulvan is the main polysaccharide component of the Ulvales (green seaweed) cell wall. It is composed of disaccharide building blocks comprising 3-sulfated rhamnose (Rha3S) linked to D-glucuronic acid (GlcA), L-iduronic acid (IduA), or D-xylose (Xyl). Has no activity on different ulvan polymers. In Formosa agariphila (strain DSM 15362 / KCTC 12365 / LMG 23005 / KMM 3901 / M-2Alg 35-1), this protein is Sulfatase.